The chain runs to 265 residues: 4-hydroxy-tetrahydrodipicolinate reductase (265 aa).

Residues 7-12 (GASGRM) and Asp33 each bind NAD(+). Arg34 contacts NADP(+). Residues 96 to 98 (GTT) and 120 to 123 (AANM) contribute to the NAD(+) site. His153 acts as the Proton donor/acceptor in catalysis. His154 is a binding site for (S)-2,3,4,5-tetrahydrodipicolinate. Lys157 functions as the Proton donor in the catalytic mechanism. 163-164 (GT) contributes to the (S)-2,3,4,5-tetrahydrodipicolinate binding site.

This sequence belongs to the DapB family.

The protein localises to the cytoplasm. It carries out the reaction (S)-2,3,4,5-tetrahydrodipicolinate + NAD(+) + H2O = (2S,4S)-4-hydroxy-2,3,4,5-tetrahydrodipicolinate + NADH + H(+). It catalyses the reaction (S)-2,3,4,5-tetrahydrodipicolinate + NADP(+) + H2O = (2S,4S)-4-hydroxy-2,3,4,5-tetrahydrodipicolinate + NADPH + H(+). It functions in the pathway amino-acid biosynthesis; L-lysine biosynthesis via DAP pathway; (S)-tetrahydrodipicolinate from L-aspartate: step 4/4. Functionally, catalyzes the conversion of 4-hydroxy-tetrahydrodipicolinate (HTPA) to tetrahydrodipicolinate. The sequence is that of 4-hydroxy-tetrahydrodipicolinate reductase from Burkholderia multivorans (strain ATCC 17616 / 249).